A 128-amino-acid chain; its full sequence is Putative lipid-binding protein At4g00165 (128 aa).

The first 23 residues, 1-23 (MGISKALRSLLILLLLNITFFFG), serve as a signal peptide directing secretion. Cystine bridges form between cysteine 34–cysteine 90, cysteine 46–cysteine 76, cysteine 56–cysteine 75, and cysteine 92–cysteine 128.

This sequence belongs to the plant LTP family. PEARLI1 subfamily.

Its subcellular location is the secreted. The polypeptide is Putative lipid-binding protein At4g00165 (Arabidopsis thaliana (Mouse-ear cress)).